A 427-amino-acid polypeptide reads, in one-letter code: Peptidase B (427 aa).

Mn(2+)-binding residues include Lys-195 and Asp-200. Residue Lys-207 is part of the active site. Residues Asp-218, Asp-277, and Glu-279 each contribute to the Mn(2+) site. Arg-281 is a catalytic residue.

The protein belongs to the peptidase M17 family. In terms of assembly, homohexamer. Mn(2+) is required as a cofactor.

The protein localises to the cytoplasm. The enzyme catalyses Release of an N-terminal amino acid, Xaa, from a peptide or arylamide. Xaa is preferably Glu or Asp but may be other amino acids, including Leu, Met, His, Cys and Gln.. Functionally, probably plays an important role in intracellular peptide degradation. The polypeptide is Peptidase B (Salmonella typhi).